A 73-amino-acid polypeptide reads, in one-letter code: Gastricsin (73 aa).

A propeptide spans 1–43 (SVIKVPLKKLKSIRQAMKEKGLLEEFLKTHKYDPAQRYRIGDI) (activation peptide). The region spanning 57–73 (YFGEISIGTPPQNFLVL) is the Peptidase A1 domain.

This sequence belongs to the peptidase A1 family.

It localises to the secreted. It catalyses the reaction More restricted specificity than pepsin A, but shows preferential cleavage at Tyr-|-Xaa bonds. High activity on hemoglobin.. In terms of biological role, hydrolyzes a variety of proteins. The chain is Gastricsin (PGC) from Sus scrofa (Pig).